We begin with the raw amino-acid sequence, 137 residues long: uncharacterized protein (137 aa).

The helical transmembrane segment at 116 to 136 threads the bilayer; sequence YLSIANLATLLLFGIIGLSII.

It is found in the host membrane. This is an uncharacterized protein from His1 virus (isolate Australia/Victoria) (His1V).